A 557-amino-acid polypeptide reads, in one-letter code: Dihydroxy-acid dehydratase (557 aa).

Position 78 (Asp-78) interacts with Mg(2+). Cys-119 provides a ligand contact to [2Fe-2S] cluster. Mg(2+)-binding residues include Asp-120 and Lys-121. An N6-carboxylysine modification is found at Lys-121. A [2Fe-2S] cluster-binding site is contributed by Cys-191. Glu-442 is a Mg(2+) binding site. The Proton acceptor role is filled by Ser-468.

The protein belongs to the IlvD/Edd family. In terms of assembly, homodimer. [2Fe-2S] cluster serves as cofactor. Requires Mg(2+) as cofactor.

It carries out the reaction (2R)-2,3-dihydroxy-3-methylbutanoate = 3-methyl-2-oxobutanoate + H2O. It catalyses the reaction (2R,3R)-2,3-dihydroxy-3-methylpentanoate = (S)-3-methyl-2-oxopentanoate + H2O. It functions in the pathway amino-acid biosynthesis; L-isoleucine biosynthesis; L-isoleucine from 2-oxobutanoate: step 3/4. The protein operates within amino-acid biosynthesis; L-valine biosynthesis; L-valine from pyruvate: step 3/4. Functions in the biosynthesis of branched-chain amino acids. Catalyzes the dehydration of (2R,3R)-2,3-dihydroxy-3-methylpentanoate (2,3-dihydroxy-3-methylvalerate) into 2-oxo-3-methylpentanoate (2-oxo-3-methylvalerate) and of (2R)-2,3-dihydroxy-3-methylbutanoate (2,3-dihydroxyisovalerate) into 2-oxo-3-methylbutanoate (2-oxoisovalerate), the penultimate precursor to L-isoleucine and L-valine, respectively. This Syntrophobacter fumaroxidans (strain DSM 10017 / MPOB) protein is Dihydroxy-acid dehydratase.